The following is a 235-amino-acid chain: MRFQTELVPARLTRRYKRFLADCVLDADGAEITAHCANPGSMMGLAAPGTRIWLEPNDDPKKKLKFGWRLVDHENGHFTGVDTSLPNRVLKEALVARHVETLSGYGTVRPEVKYGQNSRIDFLLSEDGLPDAYVEVKSVTLSRQTGQAEFPDSVTARGAKHLQELADMAQAGHRAIMLYLVQRTDCTSFTLAGDIDPTYAAAFRSARDRGVETLCLGTNITPQGIEVAGAIPIRL.

The protein belongs to the SfsA family.

This is Sugar fermentation stimulation protein homolog from Roseobacter denitrificans (strain ATCC 33942 / OCh 114) (Erythrobacter sp. (strain OCh 114)).